Reading from the N-terminus, the 270-residue chain is Probable inositol 1-monophosphatase ImpA (270 aa).

The Mg(2+) site is built by Glu-69, Asp-85, Ile-87, and Asp-88. Glu-69 is a binding site for substrate. Substrate contacts are provided by residues 87–90 (IDGT), Arg-187, and Asp-216. Residue Asp-216 participates in Mg(2+) binding.

Belongs to the inositol monophosphatase superfamily. Requires Mg(2+) as cofactor.

It catalyses the reaction a myo-inositol phosphate + H2O = myo-inositol + phosphate. It functions in the pathway polyol metabolism; myo-inositol biosynthesis; myo-inositol from D-glucose 6-phosphate: step 2/2. Catalyzes the dephosphorylation of inositol 1-phosphate (I-1-P) to yield free myo-inositol, a key metabolite in mycobacteria. In Mycobacterium tuberculosis (strain ATCC 25618 / H37Rv), this protein is Probable inositol 1-monophosphatase ImpA (impA).